The chain runs to 292 residues: 4-hydroxy-tetrahydrodipicolinate synthase (292 aa).

Threonine 45 serves as a coordination point for pyruvate. The Proton donor/acceptor role is filled by tyrosine 133. The active-site Schiff-base intermediate with substrate is lysine 161. Isoleucine 203 contributes to the pyruvate binding site.

The protein belongs to the DapA family. As to quaternary structure, homotetramer; dimer of dimers.

It localises to the cytoplasm. The enzyme catalyses L-aspartate 4-semialdehyde + pyruvate = (2S,4S)-4-hydroxy-2,3,4,5-tetrahydrodipicolinate + H2O + H(+). Its pathway is amino-acid biosynthesis; L-lysine biosynthesis via DAP pathway; (S)-tetrahydrodipicolinate from L-aspartate: step 3/4. Catalyzes the condensation of (S)-aspartate-beta-semialdehyde [(S)-ASA] and pyruvate to 4-hydroxy-tetrahydrodipicolinate (HTPA). This is 4-hydroxy-tetrahydrodipicolinate synthase from Herminiimonas arsenicoxydans.